Reading from the N-terminus, the 183-residue chain is Adenine phosphoribosyltransferase (183 aa).

The protein belongs to the purine/pyrimidine phosphoribosyltransferase family. Homodimer.

Its subcellular location is the cytoplasm. It catalyses the reaction AMP + diphosphate = 5-phospho-alpha-D-ribose 1-diphosphate + adenine. It functions in the pathway purine metabolism; AMP biosynthesis via salvage pathway; AMP from adenine: step 1/1. Catalyzes a salvage reaction resulting in the formation of AMP, that is energically less costly than de novo synthesis. This is Adenine phosphoribosyltransferase from Klebsiella pneumoniae subsp. pneumoniae (strain ATCC 700721 / MGH 78578).